Consider the following 453-residue polypeptide: Carbamoyl phosphate synthase arginine-specific small chain (453 aa).

A mitochondrion-targeting transit peptide spans 1-28 (MFARVFKAMPARASALTSVNASIQARFM). The Glutamine amidotransferase type-1 domain occupies 219-406 (HVAVIDCGVK…IDSVKKYKAS (188 aa)). The active-site Nucleophile is the C295. Catalysis depends on residues H379 and E381.

The protein belongs to the CarA family. In terms of assembly, heterodimer composed of 2 chains; the small (or glutamine) chain promotes the hydrolysis of glutamine to ammonia, which is used by the large (or ammonia) chain to synthesize carbamoyl phosphate.

Its subcellular location is the mitochondrion matrix. The catalysed reaction is hydrogencarbonate + L-glutamine + 2 ATP + H2O = carbamoyl phosphate + L-glutamate + 2 ADP + phosphate + 2 H(+). The enzyme catalyses L-glutamine + H2O = L-glutamate + NH4(+). The protein operates within amino-acid biosynthesis; L-arginine biosynthesis; carbamoyl phosphate from bicarbonate: step 1/1. Small subunit of the arginine-specific carbamoyl phosphate synthase (CPSase). CPSase catalyzes the formation of carbamoyl phosphate from the ammonia moiety of glutamine, carbonate, and phosphate donated by ATP, the first step of the arginine biosynthetic pathway. The small subunit (glutamine amidotransferase) binds and cleaves glutamine to supply the large subunit with the substrate ammonia. This chain is Carbamoyl phosphate synthase arginine-specific small chain (cpa1), found in Neosartorya fischeri (strain ATCC 1020 / DSM 3700 / CBS 544.65 / FGSC A1164 / JCM 1740 / NRRL 181 / WB 181) (Aspergillus fischerianus).